The chain runs to 197 residues: Holliday junction branch migration complex subunit RuvA (197 aa).

Residues 1–63 are domain I; the sequence is MYAYLKGIIT…EDAHLLYGFR (63 aa). Residues 64-142 form a domain II region; that stretch reads SEDEKKLFLS…VAGDGLPAKV (79 aa). Residues 143 to 147 form a flexible linker region; the sequence is AVQAS. Residues 148–197 are domain III; it reads AENQELEEAMEAMLALGYKATELKKIKKFFEGTTDTAENYIKSALKMLVK.

It belongs to the RuvA family. As to quaternary structure, homotetramer. Forms an RuvA(8)-RuvB(12)-Holliday junction (HJ) complex. HJ DNA is sandwiched between 2 RuvA tetramers; dsDNA enters through RuvA and exits via RuvB. An RuvB hexamer assembles on each DNA strand where it exits the tetramer. Each RuvB hexamer is contacted by two RuvA subunits (via domain III) on 2 adjacent RuvB subunits; this complex drives branch migration. In the full resolvosome a probable DNA-RuvA(4)-RuvB(12)-RuvC(2) complex forms which resolves the HJ.

It localises to the cytoplasm. The RuvA-RuvB-RuvC complex processes Holliday junction (HJ) DNA during genetic recombination and DNA repair, while the RuvA-RuvB complex plays an important role in the rescue of blocked DNA replication forks via replication fork reversal (RFR). RuvA specifically binds to HJ cruciform DNA, conferring on it an open structure. The RuvB hexamer acts as an ATP-dependent pump, pulling dsDNA into and through the RuvAB complex. HJ branch migration allows RuvC to scan DNA until it finds its consensus sequence, where it cleaves and resolves the cruciform DNA. The protein is Holliday junction branch migration complex subunit RuvA of Streptococcus pneumoniae serotype 2 (strain D39 / NCTC 7466).